The primary structure comprises 351 residues: Methylthioribose-1-phosphate isomerase (351 aa).

Residues 51–53, arginine 94, and glutamine 199 each bind substrate; that span reads RGA. Catalysis depends on aspartate 240, which acts as the Proton donor. 250 to 251 serves as a coordination point for substrate; that stretch reads NK.

It belongs to the eIF-2B alpha/beta/delta subunits family. MtnA subfamily. In terms of assembly, homodimer.

The catalysed reaction is 5-(methylsulfanyl)-alpha-D-ribose 1-phosphate = 5-(methylsulfanyl)-D-ribulose 1-phosphate. It functions in the pathway amino-acid biosynthesis; L-methionine biosynthesis via salvage pathway; L-methionine from S-methyl-5-thio-alpha-D-ribose 1-phosphate: step 1/6. Its function is as follows. Catalyzes the interconversion of methylthioribose-1-phosphate (MTR-1-P) into methylthioribulose-1-phosphate (MTRu-1-P). The polypeptide is Methylthioribose-1-phosphate isomerase (Bacillus cereus (strain ATCC 10987 / NRS 248)).